A 157-amino-acid chain; its full sequence is Beta-defensin 125 (157 aa).

Residues 1–20 form the signal peptide; sequence MNILMLTFIICGLLTQVTKG. Disulfide bonds link C27-C55, C35-C49, and C39-C56. Positions 109–157 are disordered; the sequence is GETMTPETNTPETTVPPSETTTPETTMPPSETATSETMPPPSQTALTHN. A compositionally biased stretch (low complexity) spans 110-145; that stretch reads ETMTPETNTPETTVPPSETTTPETTMPPSETATSET.

This sequence belongs to the beta-defensin family.

Its subcellular location is the secreted. Its function is as follows. Has antibacterial activity. The sequence is that of Beta-defensin 125 (DEFB125) from Gorilla gorilla gorilla (Western lowland gorilla).